A 383-amino-acid polypeptide reads, in one-letter code: tRNA-specific 2-thiouridylase MnmA (383 aa).

ATP contacts are provided by residues 30–37 (GLSGGVDS) and leucine 56. The active-site Nucleophile is the cysteine 117. Cysteine 117 and cysteine 216 are disulfide-bonded. ATP is bound at residue glycine 142. The tract at residues 166 to 168 (KDQ) is interaction with tRNA. Cysteine 216 functions as the Cysteine persulfide intermediate in the catalytic mechanism. Residues 321–322 (RY) form an interaction with tRNA region.

This sequence belongs to the MnmA/TRMU family.

The protein resides in the cytoplasm. It catalyses the reaction S-sulfanyl-L-cysteinyl-[protein] + uridine(34) in tRNA + AH2 + ATP = 2-thiouridine(34) in tRNA + L-cysteinyl-[protein] + A + AMP + diphosphate + H(+). In terms of biological role, catalyzes the 2-thiolation of uridine at the wobble position (U34) of tRNA, leading to the formation of s(2)U34. The polypeptide is tRNA-specific 2-thiouridylase MnmA (Synechococcus sp. (strain CC9605)).